A 245-amino-acid chain; its full sequence is Ribonuclease PH (245 aa).

Residues Arg-86 and 124-126 (GTR) each bind phosphate.

The protein belongs to the RNase PH family. In terms of assembly, homohexameric ring arranged as a trimer of dimers. It has been suggested that the active form is the dimer which binds tRNA and that the hexameric form protects the substrate recognition loop (approximately residues 65-82) from proteolysis.

The catalysed reaction is tRNA(n+1) + phosphate = tRNA(n) + a ribonucleoside 5'-diphosphate. Functionally, phosphorolytic 3'-5' exoribonuclease that plays an important role in tRNA 3'-end maturation. Removes nucleotide residues following the 3'-CCA terminus of tRNAs; can also add nucleotides to the ends of RNA molecules by using nucleoside diphosphates as substrates, but this may not be physiologically important. Probably plays a role in initiation of 16S rRNA degradation (leading to ribosome degradation) during starvation. Plays a role in the secondary pathway of 23S rRNA 3' end maturation. This is Ribonuclease PH from Bacillus subtilis (strain 168).